Consider the following 227-residue polypeptide: Calcium-binding protein 1 (227 aa).

Residue Gly-2 is the site of N-myristoyl glycine attachment. Residue Cys-4 is the site of S-palmitoyl cysteine attachment. 4 EF-hand domains span residues 82–117 (EEIE…MGYM), 136–153 (GHVD…KLLA), 159–194 (IGVK…LLGH), and 196–227 (VGHR…MMSR). Residues Asp-95, Asp-97, Asp-99, Tyr-101, and Asp-106 each coordinate Ca(2+). Asp-172, Asn-174, Asp-176, and Glu-178 together coordinate Ca(2+). At Ser-180 the chain carries Phosphoserine. Glu-183, Asp-209, Asn-211, Asp-213, Arg-215, and Glu-220 together coordinate Ca(2+).

Homodimer; when bound to calcium or magnesium. Interacts (via C-terminus) with ITPR1, ITPR2 and ITPR3. This binding is calcium dependent and the interaction correlates with calcium concentration. An additional calcium-independent interaction with the N-terminus of ITPR1 results in a decreased InsP(3) binding to the receptor. Interacts with CACNA1A (via C-terminal CDB motif) in the pre- and postsynaptic membranes. Interacts with CACNA1D and CACNA1C (via C-terminal C and IQ motifs). The binding to the C motif is calcium independent whereas the binding to IQ requires the presence of calcium and is mutually exclusive with calmodulin binding. Interacts with TRPC5 (via C-terminus). Interacts (via EF-hands 1 and 2) at microtubules with MAP1LC3B. Interacts with MYO1C. Interacts (via EF-hands 1 and 2) with NSMF (via the central NLS-containing motif region), the interaction occurs in a calcium dependent manner after synaptic NMDA receptor stimulation and prevents nuclear import of NSMF. Interacts with SPACA9 homolog. In terms of processing, phosphorylated. The phosphorylation regulates the activity. In terms of tissue distribution, expressed in the inner retina, specifically in amacrine cells and in cone OFF-bipolar cells (at protein level).

In terms of biological role, modulates calcium-dependent activity of inositol 1,4,5-triphosphate receptors (ITPRs). Inhibits agonist-induced intracellular calcium signaling. Enhances inactivation and does not support calcium-dependent facilitation of voltage-dependent P/Q-type calcium channels. Causes calcium-dependent facilitation and inhibits inactivation of L-type calcium channels by binding to the same sites as calmodulin in the C-terminal domain of CACNA1C, but has an opposite effect on channel function. Suppresses the calcium-dependent inactivation of CACNA1D. Inhibits TRPC5 channels. Prevents NMDA receptor-induced cellular degeneration. Required for the normal transfer of light signals through the retina. The sequence is that of Calcium-binding protein 1 (Cabp1) from Mus musculus (Mouse).